The following is a 161-amino-acid chain: Nucleotide-binding protein Bphyt_3208 (161 aa).

Belongs to the YajQ family.

In terms of biological role, nucleotide-binding protein. This is Nucleotide-binding protein Bphyt_3208 from Paraburkholderia phytofirmans (strain DSM 17436 / LMG 22146 / PsJN) (Burkholderia phytofirmans).